Here is a 467-residue protein sequence, read N- to C-terminus: Megakaryocyte-associated tyrosine-protein kinase (467 aa).

Positions Met-1 to Arg-20 are disordered. The SH3 domain maps to Ala-7–Ala-69. One can recognise an SH2 domain in the interval Trp-81–Lys-170. The Protein kinase domain maps to Leu-194 to Arg-443. Residues Ile-200 to Val-208 and Lys-221 each bind ATP. Asp-311 (proton acceptor) is an active-site residue. The segment at Val-445–Pro-467 is disordered.

The protein belongs to the protein kinase superfamily. Tyr protein kinase family. CSK subfamily. As to quaternary structure, interacts with KIT. Enriched in lymphoid tissues.

Its subcellular location is the cytoplasm. It is found in the membrane. It carries out the reaction L-tyrosyl-[protein] + ATP = O-phospho-L-tyrosyl-[protein] + ADP + H(+). Could play a significant role in the signal transduction of hematopoietic cells. May regulate tyrosine kinase activity of SRC-family members in brain. This chain is Megakaryocyte-associated tyrosine-protein kinase (Matk), found in Rattus norvegicus (Rat).